The primary structure comprises 326 residues: Peroxidase 1 (326 aa).

The first 22 residues, 1–22 (MASSRVILALLLAAAAVMASSA), serve as a signal peptide directing secretion. Glutamine 23 carries the pyrrolidone carboxylic acid modification. Disulfide bonds link cysteine 33–cysteine 112, cysteine 66–cysteine 71, cysteine 118–cysteine 322, and cysteine 196–cysteine 231. Residue histidine 64 is the Proton acceptor of the active site. Ca(2+) is bound by residues aspartate 65, valine 68, glycine 70, aspartate 72, and serine 74. 2 N-linked (GlcNAc...) asparagine glycosylation sites follow: asparagine 82 and asparagine 153. Proline 159 is a binding site for substrate. Asparagine 164 carries N-linked (GlcNAc...) asparagine glycosylation. Heme b is bound at residue histidine 189. Threonine 190 is a binding site for Ca(2+). N-linked (GlcNAc...) asparagine glycans are attached at residues asparagine 205 and asparagine 237. Positions 244, 247, and 252 each coordinate Ca(2+).

It belongs to the peroxidase family. Classical plant (class III) peroxidase subfamily. It depends on Ca(2+) as a cofactor. The cofactor is heme b.

Its subcellular location is the secreted. It catalyses the reaction 2 a phenolic donor + H2O2 = 2 a phenolic radical donor + 2 H2O. Functionally, removal of H(2)O(2), oxidation of toxic reductants, biosynthesis and degradation of lignin, suberization, auxin catabolism, response to environmental stresses such as wounding, pathogen attack and oxidative stress. These functions might be dependent on each isozyme/isoform in each plant tissue. This chain is Peroxidase 1 (PRX74), found in Oryza sativa subsp. japonica (Rice).